The sequence spans 537 residues: Woronin body major protein hexA (537 aa).

3 stretches are compositionally biased toward basic and acidic residues: residues 1 to 17 (MYSV…RDAQ), 59 to 70 (DRTSHVEREDTR), and 116 to 134 (DSRV…RSEN). Disordered regions lie at residues 1–20 (MYSV…QRTA), 59–79 (DRTS…PDPR), 116–200 (DSRV…KPVY), and 269–295 (PKPL…SRPS). Residues 135–144 (NAKQNKNKNN) are compositionally biased toward low complexity. The segment covering 272 to 281 (LETRKGDSFS) has biased composition (basic and acidic residues).

Belongs to the eIF-5A family. Hex1 subfamily. As to quaternary structure, forms oligomers. Self-assembles into hexagonal rods. Binds directly or indirectly to the Woronin body tether lah.

The protein resides in the cell septum. It is found in the cytoplasm. In terms of biological role, major component of Woronin bodies, fungal-specific organelles that occlude septal pores in order to separate intact from damaged compartments. HexA binds directly or indirectly to the Woronin body tether that in turn is anchored at the rim of the septal pore. Woronin bodies are important for stress resistance and virulence. In Aspergillus fumigatus (strain ATCC MYA-4609 / CBS 101355 / FGSC A1100 / Af293) (Neosartorya fumigata), this protein is Woronin body major protein hexA.